Here is a 518-residue protein sequence, read N- to C-terminus: Coiled-coil domain-containing protein 82 (518 aa).

Over residues 1–14 (MVHVRRHETRKNSK) the composition is skewed to basic residues. The disordered stretch occupies residues 1-266 (MVHVRRHETR…EDDYRYDEDG (266 aa)). The segment covering 16-27 (QKPEQKSRVDWH) has biased composition (basic and acidic residues). The segment covering 38-67 (DSDEELDSNEELDSDEEHDSGESIDSDEEL) has biased composition (acidic residues). Residues 68 to 89 (DISKKSDINELPEKETELKLIK) show a composition bias toward basic and acidic residues. Positions 92–107 (SQGSNSKHLTNTSNSS) are enriched in polar residues. A compositionally biased stretch (basic and acidic residues) spans 111-127 (EQLKETKHNDLPDDEAH). A phosphoserine mark is found at Ser170 and Ser194. Acidic residues predominate over residues 191 to 201 (DECSSLEMEQE). A Phosphothreonine modification is found at Thr202. The stretch at 204 to 232 (EKSSAARKREYHQKLQELSERSRQRRRRN) forms a coiled coil. Residues 215-225 (HQKLQELSERS) are compositionally biased toward basic and acidic residues. Residues 249–266 (GEEDEDEDEDDYRYDEDG) are compositionally biased toward acidic residues. Ser305 is modified (phosphoserine).

This is Coiled-coil domain-containing protein 82 (Ccdc82) from Mus musculus (Mouse).